Here is a 238-residue protein sequence, read N- to C-terminus: B-box zinc finger protein 25 (238 aa).

Zn(2+)-binding residues include Cys-5, Cys-8, Cys-28, His-33, Cys-57, Cys-60, Cys-80, and His-85. The B box-type 1; atypical zinc finger occupies Cys-5–Leu-47. The B box-type 2; atypical zinc finger occupies Cys-57–Ala-99. The interval Val-115–Pro-139 is disordered. The segment covering Asp-121–Ala-137 has biased composition (polar residues). The segment at Asp-226–Gly-238 is interaction with COP1.

In terms of assembly, interacts with COP1 WD40 domain. Interacts with HY5 and HYH. COP1-mediated ubiquitination and subsequent proteasomal degradation of BBX25/STH occurs in the dark.

Its subcellular location is the nucleus. Acts as a negative regulator of seedling photomorphogenesis. BBX25/STH and BBX24/STO function as transcriptional corepressors of HY5 activity, leading to the down-regulation of BBX22 expression. BBX25/STH acts additively with BBX24/STO during de-etiolation and the hypocotyl shade avoidance response. This chain is B-box zinc finger protein 25, found in Arabidopsis thaliana (Mouse-ear cress).